We begin with the raw amino-acid sequence, 215 residues long: UPF0319 protein VVA1446 (215 aa).

Residues 1-21 (MNIIKPLTCILAMSISGLATA) form the signal peptide.

It belongs to the UPF0319 family.

The sequence is that of UPF0319 protein VVA1446 from Vibrio vulnificus (strain YJ016).